A 238-amino-acid polypeptide reads, in one-letter code: Large ribosomal subunit protein uL2 (238 aa).

The tract at residues 199-238 (PHGGGLHQSVSRSSTVARNTPPGRKVGHIAARRTGRRDRK) is disordered. The segment covering 206-216 (QSVSRSSTVAR) has biased composition (polar residues). A compositionally biased stretch (basic residues) spans 223–238 (KVGHIAARRTGRRDRK).

It belongs to the universal ribosomal protein uL2 family. In terms of assembly, part of the 50S ribosomal subunit. Forms a bridge to the 30S subunit in the 70S ribosome.

One of the primary rRNA binding proteins. Required for association of the 30S and 50S subunits to form the 70S ribosome, for tRNA binding and peptide bond formation. It has been suggested to have peptidyltransferase activity; this is somewhat controversial. Makes several contacts with the 16S rRNA in the 70S ribosome. In Metallosphaera sedula (strain ATCC 51363 / DSM 5348 / JCM 9185 / NBRC 15509 / TH2), this protein is Large ribosomal subunit protein uL2.